The following is a 240-amino-acid chain: UDP-2,3-diacylglucosamine hydrolase (240 aa).

The Mn(2+) site is built by Asp-8, His-10, Asp-41, Asn-79, and His-114. Asn-79 to Arg-80 is a binding site for substrate. The substrate site is built by Asp-122, Ser-160, Asn-164, Lys-167, and His-195. His-195 and His-197 together coordinate Mn(2+).

The protein belongs to the LpxH family. Mn(2+) is required as a cofactor.

The protein localises to the cell inner membrane. The enzyme catalyses UDP-2-N,3-O-bis[(3R)-3-hydroxytetradecanoyl]-alpha-D-glucosamine + H2O = 2-N,3-O-bis[(3R)-3-hydroxytetradecanoyl]-alpha-D-glucosaminyl 1-phosphate + UMP + 2 H(+). Its pathway is glycolipid biosynthesis; lipid IV(A) biosynthesis; lipid IV(A) from (3R)-3-hydroxytetradecanoyl-[acyl-carrier-protein] and UDP-N-acetyl-alpha-D-glucosamine: step 4/6. Its function is as follows. Hydrolyzes the pyrophosphate bond of UDP-2,3-diacylglucosamine to yield 2,3-diacylglucosamine 1-phosphate (lipid X) and UMP by catalyzing the attack of water at the alpha-P atom. Involved in the biosynthesis of lipid A, a phosphorylated glycolipid that anchors the lipopolysaccharide to the outer membrane of the cell. The sequence is that of UDP-2,3-diacylglucosamine hydrolase from Pectobacterium atrosepticum (strain SCRI 1043 / ATCC BAA-672) (Erwinia carotovora subsp. atroseptica).